The primary structure comprises 166 residues: uncharacterized protein (166 aa).

Gly residues-rich tracts occupy residues 1-10 and 76-86; these read MNYGNNGGGQ and YRGGGGGGGGN. Positions 1-117 are disordered; that stretch reads MNYGNNGGGQ…GGGNKNFGPI (117 aa).

This is an uncharacterized protein from Caenorhabditis elegans.